Here is a 1719-residue protein sequence, read N- to C-terminus: MSIQTRSAVGYSGGQVTWTGPDECAWTCGNAVVLHTLGSKAQRVLKGTGFGISCFAVNKRHGLLAIAEKGLKPMVTVYSTKTLQPLAKLLPGDVREEGAGGGADKPSGSGAVSGKQQSSGPSVVLGVTCLAFSNDGERLAVCGDEPDCSVIVYGWRKAEVLGRCRMPAAASSASSTSPASSVSFHPLDASVLATSGPGGACAVWFLEPLWEKAVFRPLQLAAGALPAGAEVTCHAWGPGGLYVGTSTGGLVLLDTATMAPLQLHAAAGGAAGEVAGGASGGASSPTPGASSGGAAGGSVVAVVPDAVTSGAAVTALTLNRDLVAVAGADGSVRVFVSVPAAAAAITPEPLALSHEVWLGRAGPARGVAVASAECGGADHATLLLGCPDGTMYRAPLAPKQGGGPTHSVLVVDCHVGRLAGVVPHPGGGAFLTTGSDGSVRVWSTTDGALLGRKQLSSAQTALAAAAPGASLAAVGSETGVVRVLVLPPASTAASAAASDAPLPALRVLFRQRLHSAPVDVLVFSPANDLLLSAGRDGIAWLCSVDARGGRVRPLGCLSLPPGERVLSATWPRSDGGSGAASGHAQAGPVSTTSAEGDEPSCLLSLAGGGLMCLTASAELHSGNWRNPYPDMVLLVTIKLLRLEVAMLAVAAVPGDRYGDAYGLGADKQLHKLVLPAEAAAWAGLRARPLRSAQHVPAHARASGGVAVAPGGHLLASGAADGTVALRNMSLITLAAQQGGDGAGAGLHDITAGGVVTVSFDATGRYLASAGADGALFVYELSKRAAVANRLATLRSRIADLLAANEAAPELERLTRNDMIVDVGLVEELQRETENRVAAVQAAVKKEHLRTELLAERVRRMVWDSMAVKGAVISGLRAPPGQHERVLKQVTMLRRVELAEQAALGVIPYGLIDFDVYCNTRKALQVQLLKQKMRDVQAGFNTDFNKVAAAKKADCDRIADLNARLDDTLKDLRKLGAGPPAGLLDERFSLSAQQDTRDNIAATVLMVREEEVGAERYVSPAERAKQEAARKADEDAAKRSAKDNAGERALRQMMGGTLAARGGGHDESNPFSLPKPAWLVALGVEPDAVNPKLITEEQNRELKEWQAKEKSLQEERAKRITVLEMELRTAKAAVEELTSEAVERGLLARLGAAKEAHGRAASELSERRAALAELESRQAQLGADERLMDRNFKKEFAEADIHLNRLLQLYRARKPEQLASMPGGGAIGAAGGHQSGVEASSGSFSRVPGGAPGLHRQASLAHSPSGAAAAGGEAAGAATAAGGAGSSGGAAPCGAAGNPSTGPPANITPTYTHALPLPHAAVAATTLNPFPDAPPGASGHDRPGSSALHPSHSHASVHGNHAHHHLSAAAAAAGHSDPLHNLSGLKPEGLDAALWDRFVAYRAERLAAEAGARAAAGDLVLARRDLPELESREAALGSEMEVLMGSITALRSERKVAAYDNEVQLRLLAGQVEAMPPRPASADMSDARLLGRGVVESLNSVVLGKGTKKVELLTAMKDFKRGIYAAQWEAQAADMRLDDLRAKIRDLQLLHVTRDMQTVLKDGEDRSSALEAANLEALMKQRERLHAKALEDKRRRLRKLAADVSSRSAQNQEVAVHLVTLGKVLEEQQRLQAGMQSANDQATRRMRSLVTHKKLKEIALAQQNELGELRQQLEKLRLRTYPTFIESGAVAGMPSPPRRLPPDIKLLAGSPSSSSVAGRT.

Residues 94–120 (VREEGAGGGADKPSGSGAVSGKQQSSG) form a disordered region. WD repeat units follow at residues 122–165 (SVVL…GRCR), 174–214 (SSTS…EKAV), 226–263 (PAGA…PLQL), 308–345 (TSGA…AAAI), 413–452 (CHVG…LLGR), and 513–552 (LHSA…GRVR). Residues 569–596 (TWPRSDGGSGAASGHAQAGPVSTTSAEG) form a disordered region. 2 WD repeats span residues 697–736 (AHAR…LAAQ) and 749–788 (ITAG…AVAN). Residues 1022 to 1045 (RAKQEAARKADEDAAKRSAKDNAG) are disordered. Residues 1073-1114 (PKPAWLVALGVEPDAVNPKLITEEQNRELKEWQAKEKSLQEE) form a WD 9 repeat. 3 disordered regions span residues 1220–1269 (MPGG…AAAA), 1277–1296 (ATAA…GAAG), and 1325–1372 (TLNP…AAAA). Gly residues predominate over residues 1221–1233 (PGGGAIGAAGGHQ). Low complexity predominate over residues 1257–1269 (ASLAHSPSGAAAA). The segment covering 1344–1358 (SSALHPSHSHASVHG) has biased composition (low complexity). Coiled-coil stretches lie at residues 1524–1609 (AAQW…RSAQ) and 1651–1679 (HKKL…RLRT). The segment at 1685 to 1719 (ESGAVAGMPSPPRRLPPDIKLLAGSPSSSSVAGRT) is disordered. Positions 1709-1719 (SPSSSSVAGRT) are enriched in polar residues.

Belongs to the CFAP43 family.

Its subcellular location is the cell projection. The protein resides in the cilium. It localises to the flagellum. It is found in the cytoplasm. The protein localises to the cytoskeleton. Its subcellular location is the flagellum axoneme. Its function is as follows. Flagellar protein involved in flagellum axoneme organization and function. The chain is Cilia- and flagella-associated protein 43 from Chlamydomonas reinhardtii (Chlamydomonas smithii).